Consider the following 244-residue polypeptide: Putative lipoprotein LprA (244 aa).

The first 24 residues, Met-1–Gly-24, serve as a signal peptide directing secretion. A lipid anchor (N-palmitoyl cysteine) is attached at Cys-25. Cys-25 is lipidated: S-diacylglycerol cysteine.

This sequence belongs to the LppX/LprAFG lipoprotein family.

The protein resides in the cell membrane. The chain is Putative lipoprotein LprA (lprA) from Mycobacterium bovis (strain ATCC BAA-935 / AF2122/97).